Here is a 473-residue protein sequence, read N- to C-terminus: Phosphatidylserine synthase 2 (473 aa).

Residues 1-25 form a disordered region; it reads MRRGERRVAGGSGSESPLLKGRRST. The Cytoplasmic portion of the chain corresponds to 1 to 40; that stretch reads MRRGERRVAGGSGSESPLLKGRRSTESEVYDDGTNTFFWR. 3 positions are modified to phosphoserine: Ser12, Ser14, and Ser16. Residues 41 to 61 traverse the membrane as a helical segment; sequence AHTLTVLFILTCALGYVTLLE. Topologically, residues 62–74 are lumenal; that stretch reads ETPQDTAYNTKRG. Residues 75-95 form a helical membrane-spanning segment; the sequence is IVASILVFLCFGVTQAKDGPF. At 96–104 the chain is on the cytoplasmic side; it reads SRPHPAYWR. A helical membrane pass occupies residues 105–125; that stretch reads FWLCVSVVYELFLIFILFQTV. Residues 126–291 lie on the Lumenal side of the membrane; that stretch reads QDGRQFLKYV…EWKPASSLHR (166 aa). N-linked (GlcNAc...) asparagine glycosylation occurs at Asn159. Residues 292-312 form a helical membrane-spanning segment; that stretch reads WLAVCGIILVFLLAELNTFYL. Position 313 (Lys313) is a topological domain, cytoplasmic. The chain crosses the membrane as a helical span at residues 314–334; that stretch reads FVLWMPPEHYLVLLRLVFFVN. The Lumenal portion of the chain corresponds to 335–354; sequence VGGVAMREIYDFMDELKPHR. A helical transmembrane segment spans residues 355–375; that stretch reads KLGQQAWLVAAITVTELLIVV. The Cytoplasmic segment spans residues 376–381; sequence KYDPHT. A helical membrane pass occupies residues 382-402; that stretch reads LTLSLPFYISQCWTLGSILVL. Over 403–473 the chain is Lumenal; it reads TWTVWRFFLR…TAEEGTSAAS (71 aa). The interval 422–473 is disordered; it reads RRQKQQSHQARAVNNRDGHPGPDDDLLGTGTAEEEGTTNDGVTAEEGTSAAS.

This sequence belongs to the phosphatidyl serine synthase family. Highly expressed in testis. Detected at lower levels in kidney and heart.

Its subcellular location is the endoplasmic reticulum membrane. The protein localises to the membrane. It catalyses the reaction a 1,2-diacyl-sn-glycero-3-phosphoethanolamine + L-serine = a 1,2-diacyl-sn-glycero-3-phospho-L-serine + ethanolamine. The catalysed reaction is 1-hexadecanoyl-2-(9Z-octadecenoyl)-sn-glycero-3-phosphoethanolamine + L-serine = 1-hexadecanoyl-2-(9Z-octadecenoyl)-sn-glycero-3-phospho-L-serine + ethanolamine. It carries out the reaction 1-hexadecanoyl-2-(4Z,7Z,10Z,13Z,16Z,19Z-docosahexaenoyl)-sn-glycero-3-phosphoethanolamine + L-serine = 1-hexadecanoyl-2-(4Z,7Z,10Z,13Z,16Z,19Z-docosahexaenoyl)-sn-glycero-3-phosphoserine + ethanolamine. The enzyme catalyses 1-octadecanoyl-2-(5Z,8Z,11Z,14Z)-eicosatetraenoyl-sn-glycero-3-phosphoethanolamine + L-serine = 1-octadecanoyl-2-(5Z,8Z,11Z,14Z)-eicosatetraenoyl-sn-glycero-3-phosphoserine + ethanolamine. It catalyses the reaction 1-octadecanoyl-2-(4Z,7Z,10Z,13Z,16Z,19Z-docosahexaenoyl)-sn-glycero-3-phosphoethanolamine + L-serine = 1-octadecanoyl-2-(4Z,7Z,10Z,13Z,16Z,19Z-docosahexaenoyl)-sn-glycero-3-phosphoserine + ethanolamine. The catalysed reaction is 1-(1Z-octadecenyl)-2-(4Z,7Z,10Z,13Z,16Z,19Z-docosahexaenoyl)-sn-glycero-3-phosphoethanolamine + L-serine = 1-(1Z-octadecenyl)-2-(4Z,7Z,10Z,13Z,16Z,19Z-docosahexaenoyl)-sn-glycero-3-phospho-L-serine + ethanolamine. It carries out the reaction 1-octadecanoyl-2-(9Z-octadecenoyl)-sn-glycero-3-phosphoethanolamine + L-serine = 1-octadecanoyl-2-(9Z-octadecenoyl)-sn-glycero-3-phospho-L-serine + ethanolamine. The enzyme catalyses 1-(1Z-octadecenyl)-2-(9Z-octadecenoyl)-sn-glycero-3-phosphoethanolamine + L-serine = 1-(1Z-octadecenyl)-2-(9Z-octadecenoyl)-sn-glycero-3-phospho-L-serine + ethanolamine. It catalyses the reaction 1-(1Z-octadecenyl)-2-(5Z,8Z,11Z,14Z- eicosatetraenoyl)-sn-glycero-3-phosphoethanolamine + L-serine = 1-(1Z-octadecenyl)-2-(5Z,8Z,11Z,14Z-eicosatetraenoyl)-sn-glycero-3-phospho-L-serine + ethanolamine. The protein operates within phospholipid metabolism; phosphatidylserine biosynthesis. Almost complete inhibition by ethanolamine in both the mitochondria-associated membrane (MAM) and endoplasmic reticulum (ER) per se. Functionally, catalyzes a base-exchange reaction in which the polar head group of phosphatidylethanolamine (PE) or phosphatidylcholine (PC) is replaced by L-serine. Catalyzes the conversion of phosphatatidylethanolamine and does not act on phosphatidylcholine. Can utilize both phosphatidylethanolamine (PE) plasmalogen and diacyl PE as substrate and the latter is six times better utilized, indicating the importance of an ester linkage at the sn-1 position. Although it shows no sn-1 fatty acyl preference, exhibits significant preference towards docosahexaenoic acid (22:6n-3) compared with 18:1 or 20:4 at the sn-2 position. The chain is Phosphatidylserine synthase 2 (Ptdss2) from Mus musculus (Mouse).